The sequence spans 454 residues: tRNA modification GTPase MnmE (454 aa).

(6S)-5-formyl-5,6,7,8-tetrahydrofolate contacts are provided by arginine 23, glutamate 80, and lysine 120. The TrmE-type G domain maps to 216-377; that stretch reads GMKVVIAGRP…LRNHLKQSMG (162 aa). Asparagine 226 serves as a coordination point for K(+). Residues 226–231, 245–251, 270–273, 335–338, and 358–360 contribute to the GTP site; these read NAGKSS, TDIAGTT, DTAG, NKAD, and SAR. Mg(2+) is bound at residue serine 230. Residues threonine 245, isoleucine 247, and threonine 250 each contribute to the K(+) site. Threonine 251 contributes to the Mg(2+) binding site. Lysine 454 lines the (6S)-5-formyl-5,6,7,8-tetrahydrofolate pocket.

It belongs to the TRAFAC class TrmE-Era-EngA-EngB-Septin-like GTPase superfamily. TrmE GTPase family. In terms of assembly, homodimer. Heterotetramer of two MnmE and two MnmG subunits. The cofactor is K(+).

The protein localises to the cytoplasm. Its function is as follows. Exhibits a very high intrinsic GTPase hydrolysis rate. Involved in the addition of a carboxymethylaminomethyl (cmnm) group at the wobble position (U34) of certain tRNAs, forming tRNA-cmnm(5)s(2)U34. This Salmonella paratyphi C (strain RKS4594) protein is tRNA modification GTPase MnmE.